The primary structure comprises 213 residues: Imidazole glycerol phosphate synthase subunit HisH (213 aa).

The region spanning serine 4–proline 213 is the Glutamine amidotransferase type-1 domain. Cysteine 83 serves as the catalytic Nucleophile. Active-site residues include histidine 193 and glutamate 195.

As to quaternary structure, heterodimer of HisH and HisF.

The protein localises to the cytoplasm. The catalysed reaction is 5-[(5-phospho-1-deoxy-D-ribulos-1-ylimino)methylamino]-1-(5-phospho-beta-D-ribosyl)imidazole-4-carboxamide + L-glutamine = D-erythro-1-(imidazol-4-yl)glycerol 3-phosphate + 5-amino-1-(5-phospho-beta-D-ribosyl)imidazole-4-carboxamide + L-glutamate + H(+). It carries out the reaction L-glutamine + H2O = L-glutamate + NH4(+). The protein operates within amino-acid biosynthesis; L-histidine biosynthesis; L-histidine from 5-phospho-alpha-D-ribose 1-diphosphate: step 5/9. Its function is as follows. IGPS catalyzes the conversion of PRFAR and glutamine to IGP, AICAR and glutamate. The HisH subunit catalyzes the hydrolysis of glutamine to glutamate and ammonia as part of the synthesis of IGP and AICAR. The resulting ammonia molecule is channeled to the active site of HisF. The sequence is that of Imidazole glycerol phosphate synthase subunit HisH from Burkholderia pseudomallei (strain K96243).